A 186-amino-acid chain; its full sequence is MKKTQYNNLVSSYARVLFHVSGSRLGIIRKEVEFLLAFFKDQRDVFVYLSHPMISFAHKKEVMLSINEHLSENLVKFIMVIFANKRSSLLILILEKFLSLARENENEFEITIKSAETLKESDIKIITESLSFLGKIIKVSNVVDPSILGGFVVRYGFNLIDASLKSYLDRLVDLSKMEILKVRNFV.

The protein belongs to the ATPase delta chain family. F-type ATPases have 2 components, F(1) - the catalytic core - and F(0) - the membrane proton channel. F(1) has five subunits: alpha(3), beta(3), gamma(1), delta(1), epsilon(1). F(0) has three main subunits: a(1), b(2) and c(10-14). The alpha and beta chains form an alternating ring which encloses part of the gamma chain. F(1) is attached to F(0) by a central stalk formed by the gamma and epsilon chains, while a peripheral stalk is formed by the delta and b chains.

Its subcellular location is the cell membrane. Functionally, f(1)F(0) ATP synthase produces ATP from ADP in the presence of a proton or sodium gradient. F-type ATPases consist of two structural domains, F(1) containing the extramembraneous catalytic core and F(0) containing the membrane proton channel, linked together by a central stalk and a peripheral stalk. During catalysis, ATP synthesis in the catalytic domain of F(1) is coupled via a rotary mechanism of the central stalk subunits to proton translocation. Its function is as follows. This protein is part of the stalk that links CF(0) to CF(1). It either transmits conformational changes from CF(0) to CF(1) or is implicated in proton conduction. This Wolbachia pipientis wMel protein is ATP synthase subunit delta.